A 161-amino-acid polypeptide reads, in one-letter code: Regulator of ribonuclease activity A (161 aa).

The protein belongs to the RraA family. Homotrimer. Binds to both RNA-binding sites in the C-terminal region of Rne and to RhlB.

The protein resides in the cytoplasm. In terms of biological role, globally modulates RNA abundance by binding to RNase E (Rne) and regulating its endonucleolytic activity. Can modulate Rne action in a substrate-dependent manner by altering the composition of the degradosome. Modulates RNA-binding and helicase activities of the degradosome. This is Regulator of ribonuclease activity A from Salmonella agona (strain SL483).